Consider the following 132-residue polypeptide: MSTHDPISDLITRIRNAQMRSKSKVSTPGSRMRASVLEVLKSEGYIRGYASVEHPSGRSELEIELKYFDGEPVIREIERVSRPGRRVYASVKNLPRVNNGLGISVLSTPKGIMADHDARDANVGGEVLFTVF.

Belongs to the universal ribosomal protein uS8 family. Part of the 30S ribosomal subunit. Contacts proteins S5 and S12.

Functionally, one of the primary rRNA binding proteins, it binds directly to 16S rRNA central domain where it helps coordinate assembly of the platform of the 30S subunit. This is Small ribosomal subunit protein uS8 from Rhodopseudomonas palustris (strain HaA2).